A 227-amino-acid chain; its full sequence is Cytochrome c oxidase subunit 2 (227 aa).

The Mitochondrial intermembrane segment spans residues 1-14; it reads MAYPMQLGFQDATS. The helical transmembrane segment at 15–45 threads the bilayer; sequence PIMEELLHFHDHTLMIVFLISSLVLYIISLM. Topologically, residues 46 to 59 are mitochondrial matrix; it reads LTTKLTHTSTMDAQ. Residues 60-87 form a helical membrane-spanning segment; it reads EVETVWTILPAVILIMIALPSLRILYMM. Residues 88–227 are Mitochondrial intermembrane-facing; it reads DEINNPSLTV…HFEKWSASML (140 aa). Cu cation is bound by residues His-161, Cys-196, Glu-198, Cys-200, His-204, and Met-207. Glu-198 contacts Mg(2+).

This sequence belongs to the cytochrome c oxidase subunit 2 family. As to quaternary structure, component of the cytochrome c oxidase (complex IV, CIV), a multisubunit enzyme composed of 14 subunits. The complex is composed of a catalytic core of 3 subunits MT-CO1, MT-CO2 and MT-CO3, encoded in the mitochondrial DNA, and 11 supernumerary subunits COX4I, COX5A, COX5B, COX6A, COX6B, COX6C, COX7A, COX7B, COX7C, COX8 and NDUFA4, which are encoded in the nuclear genome. The complex exists as a monomer or a dimer and forms supercomplexes (SCs) in the inner mitochondrial membrane with NADH-ubiquinone oxidoreductase (complex I, CI) and ubiquinol-cytochrome c oxidoreductase (cytochrome b-c1 complex, complex III, CIII), resulting in different assemblies (supercomplex SCI(1)III(2)IV(1) and megacomplex MCI(2)III(2)IV(2)). Found in a complex with TMEM177, COA6, COX18, COX20, SCO1 and SCO2. Interacts with TMEM177 in a COX20-dependent manner. Interacts with COX20. Interacts with COX16. It depends on Cu cation as a cofactor.

It is found in the mitochondrion inner membrane. The catalysed reaction is 4 Fe(II)-[cytochrome c] + O2 + 8 H(+)(in) = 4 Fe(III)-[cytochrome c] + 2 H2O + 4 H(+)(out). Functionally, component of the cytochrome c oxidase, the last enzyme in the mitochondrial electron transport chain which drives oxidative phosphorylation. The respiratory chain contains 3 multisubunit complexes succinate dehydrogenase (complex II, CII), ubiquinol-cytochrome c oxidoreductase (cytochrome b-c1 complex, complex III, CIII) and cytochrome c oxidase (complex IV, CIV), that cooperate to transfer electrons derived from NADH and succinate to molecular oxygen, creating an electrochemical gradient over the inner membrane that drives transmembrane transport and the ATP synthase. Cytochrome c oxidase is the component of the respiratory chain that catalyzes the reduction of oxygen to water. Electrons originating from reduced cytochrome c in the intermembrane space (IMS) are transferred via the dinuclear copper A center (CU(A)) of subunit 2 and heme A of subunit 1 to the active site in subunit 1, a binuclear center (BNC) formed by heme A3 and copper B (CU(B)). The BNC reduces molecular oxygen to 2 water molecules using 4 electrons from cytochrome c in the IMS and 4 protons from the mitochondrial matrix. This chain is Cytochrome c oxidase subunit 2 (MT-CO2), found in Tragelaphus imberbis (Lesser kudu).